A 393-amino-acid polypeptide reads, in one-letter code: Venom metalloproteinase BumaMPs1 (393 aa).

An N-terminal signal peptide occupies residues 1 to 15 (MFVHLLVLLFAAVEA). Residue Asn158 is glycosylated (N-linked (GlcNAc...) asparagine). One can recognise a Peptidase M12B domain in the interval 167-377 (KCVKIEYVFV…RVEELITRRK (211 aa)). Zn(2+) is bound at residue His323. Residue Glu324 is part of the active site. Residues His327 and His333 each coordinate Zn(2+). The segment at 378–393 (INHCIVETCDGKRKRN) is disintegrin-like domain.

It belongs to the venom metalloproteinase (M12B) family. Requires Zn(2+) as cofactor. In terms of processing, contains several disulfide bonds. As to expression, expressed by the venom gland.

It is found in the secreted. Metalloprotease. This is Venom metalloproteinase BumaMPs1 from Olivierus martensii (Manchurian scorpion).